The following is a 317-amino-acid chain: Phospholipase A1 1 (317 aa).

Residues 1–7 (RLIMFVG) form the signal peptide. A propeptide spanning residues 8–17 (DPSSSNELDR) is cleaved from the precursor. Cysteine 21 and cysteine 104 are oxidised to a cystine. N-linked (GlcNAc...) asparagine glycosylation occurs at asparagine 25. The active-site Nucleophile is serine 154. The active-site Charge relay system is aspartate 182. Cysteine 193 and cysteine 198 are disulfide-bonded. The N-linked (GlcNAc...) asparagine glycan is linked to asparagine 229. A disulfide bridge connects residues cysteine 236 and cysteine 244. Histidine 246 acts as the Charge relay system in catalysis. Cystine bridges form between cysteine 261/cysteine 285, cysteine 262/cysteine 310, and cysteine 278/cysteine 283.

This sequence belongs to the AB hydrolase superfamily. Lipase family. In terms of tissue distribution, expressed by the venom gland.

It is found in the secreted. The enzyme catalyses a 1,2-diacyl-sn-glycero-3-phosphocholine + H2O = a 2-acyl-sn-glycero-3-phosphocholine + a fatty acid + H(+). Its function is as follows. Catalyzes the hydrolysis of phosphatidylcholine with phospholipase A1 activity. May act as an allergen and induce hemolytic activity. This is Phospholipase A1 1 from Dolichovespula maculata (Bald-faced hornet).